Here is a 356-residue protein sequence, read N- to C-terminus: MALCIKNGFLAAALVLVGLLMCSIQMIGAQSIGVCYGKIANNLPSEQDVINLYKANGIRKMRIYYPDKNIFKALKGSNIEIILDVPNQDLEALANSSIANGWVQDNIRSHFPYVKFKYISIGNEVSPINNGQYSQFLLHAMENVYNALAASGLQDKIKVTTATYSGLLANTYPPKASIFRGEFNSFINPIIQFLAQNNLPLLANVYPYFVHISNTADVPLSYALFTQRGKNSAGYQNLFDAILDSMYFAVEKAGGPNVEIIVSESGWPSEGNSAATIENAQTYYRNLIDHVKRGAGTPKKPGKSIETYLFAMFDENVKKGEITEKHFGLFSPDQRAKYQLNFNSLMPIYIDISRVI.

The N-terminal stretch at Met1–Ala29 is a signal peptide. Gln30 carries the pyrrolidone carboxylic acid modification. Residue Asn95 is glycosylated (N-linked (GlcNAc...) asparagine). Glu124 functions as the Proton donor in the catalytic mechanism. Glu264 functions as the Nucleophile in the catalytic mechanism.

This sequence belongs to the glycosyl hydrolase 17 family. Is expressed primarily in epidermal cell of healthy plant, and following induction by ethylene, accumulates in mesophyll cells.

Its subcellular location is the secreted. It localises to the extracellular space. The enzyme catalyses Hydrolysis of (1-&gt;3)-beta-D-glucosidic linkages in (1-&gt;3)-beta-D-glucans.. Functionally, is thought to be an important plant defense-related product against fungal pathogens. The protein is Glucan endo-1,3-beta-glucosidase, acidic isoform GL153 (GGL4) of Nicotiana tabacum (Common tobacco).